The sequence spans 570 residues: Hydroxylamine reductase (570 aa).

Cysteine 5, cysteine 8, cysteine 17, and cysteine 23 together coordinate [4Fe-4S] cluster. Positions 266, 290, 334, 425, 453, 478, 513, and 515 each coordinate hybrid [4Fe-2O-2S] cluster. At cysteine 425 the chain carries Cysteine persulfide.

Belongs to the HCP family. Requires [4Fe-4S] cluster as cofactor. Hybrid [4Fe-2O-2S] cluster serves as cofactor.

Its subcellular location is the cytoplasm. The catalysed reaction is A + NH4(+) + H2O = hydroxylamine + AH2 + H(+). In terms of biological role, catalyzes the reduction of hydroxylamine to form NH(3) and H(2)O. The protein is Hydroxylamine reductase of Clostridium botulinum (strain Kyoto / Type A2).